Consider the following 467-residue polypeptide: 3-isopropylmalate dehydratase large subunit (467 aa).

C347, C408, and C411 together coordinate [4Fe-4S] cluster.

Belongs to the aconitase/IPM isomerase family. LeuC type 1 subfamily. As to quaternary structure, heterodimer of LeuC and LeuD. It depends on [4Fe-4S] cluster as a cofactor.

The catalysed reaction is (2R,3S)-3-isopropylmalate = (2S)-2-isopropylmalate. It participates in amino-acid biosynthesis; L-leucine biosynthesis; L-leucine from 3-methyl-2-oxobutanoate: step 2/4. In terms of biological role, catalyzes the isomerization between 2-isopropylmalate and 3-isopropylmalate, via the formation of 2-isopropylmaleate. The protein is 3-isopropylmalate dehydratase large subunit of Bordetella pertussis (strain Tohama I / ATCC BAA-589 / NCTC 13251).